An 857-amino-acid chain; its full sequence is Facilitated trehalose transporter Tret1-1 (857 aa).

2 disordered regions span residues 1-27 (MSGR…GKLK) and 92-203 (SFRP…KATS). The Cytoplasmic portion of the chain corresponds to 1–392 (MSGRDNRGAG…VYRPTTNPIY (392 aa)). The span at 134–143 (EIREHRDRQQ) shows a compositional bias: basic and acidic residues. A compositionally biased stretch (polar residues) spans 171-181 (GNSNTNSNKAA). Residues Ser-248, Ser-249, Ser-250, Ser-320, and Ser-322 each carry the phosphoserine modification. The segment at 327 to 346 (LTSRQHFQQQRSISTDSRKS) is disordered. The span at 330-341 (RQHFQQQRSIST) shows a compositional bias: polar residues. The chain crosses the membrane as a helical span at residues 393–413 (IWTQVLAALSVSLGSLVVGFV). Topologically, residues 414–440 (SAYTSPALVSMTDRNITSFEVTQDAGS) are extracellular. Asn-428 carries an N-linked (GlcNAc...) asparagine glycan. A helical transmembrane segment spans residues 441–461 (WVGGIMPLAALAGGITGGPLI). Residues 462–473 (EYLGRRNTILAT) are Cytoplasmic-facing. A helical transmembrane segment spans residues 474 to 494 (AVPFIVSSLLIACAVNVAMVL). The Extracellular portion of the chain corresponds to 495-497 (CGR). A helical transmembrane segment spans residues 498–518 (FLAGFCVGIASLSLPVYLGET). Residues 519–528 (VQPEVRGTLG) are Cytoplasmic-facing. The chain crosses the membrane as a helical span at residues 529–549 (LLPTAFGNIGILLCFVAGSFM). N-linked (GlcNAc...) asparagine glycosylation is present at Asn-550. At 550–552 (NWS) the chain is on the extracellular side. Residues 553–573 (MLAFLGAALPVPFLILMFLIP) traverse the membrane as a helical segment. Over 574–636 (ETPRWFVGRG…ELLKLNNLKP (63 aa)) the chain is Cytoplasmic. The helical transmembrane segment at 637–657 (LSISLGLMFFQQFSGINAVIF) threads the bilayer. Over 658-673 (YTVQIFKDAGSTIDGN) the chain is Extracellular. The helical transmembrane segment at 674-694 (LCTIIVGIVNFLATFIGIVLI) threads the bilayer. At 695-700 (DRAGRK) the chain is on the cytoplasmic side. A helical transmembrane segment spans residues 701–721 (ILLYVSDIAMVLTLFVLGGFF). The Extracellular portion of the chain corresponds to 722–740 (YCKANGPDVSHLGWLPLTC). The chain crosses the membrane as a helical span at residues 741 to 761 (FVIYILGFSLGFGPIPWLMMG). Over 762 to 767 (EILPAK) the chain is Cytoplasmic. A helical transmembrane segment spans residues 768 to 788 (IRGSAASVATAFNWFCTFVVT). Over 789 to 801 (KTFQDLTVAMGAH) the chain is Extracellular. The chain crosses the membrane as a helical span at residues 802–822 (GAFWLFGAICFVGLFFVIIYV). Residues 823–857 (PETQGKTLEDIERKMMGRVRRMSSVANIKPLSFNM) are Cytoplasmic-facing. Ser-845 and Ser-846 each carry phosphoserine.

The protein belongs to the major facilitator superfamily. Sugar transporter (TC 2.A.1.1) family. Trehalose transporter subfamily.

The protein localises to the cell membrane. Its function is as follows. Low-capacity facilitative transporter for trehalose. Does not transport maltose, sucrose or lactose. Mediates the bidirectional transfer of trehalose. Responsible for the transport of trehalose synthesized in the fat body and the incorporation of trehalose into other tissues that require a carbon source, thereby regulating trehalose levels in the hemolymph. This is Facilitated trehalose transporter Tret1-1 from Drosophila sechellia (Fruit fly).